The following is a 497-amino-acid chain: MSAKFEISFSKSVKLNGGLAILLKTAEADSAAGAETADPAGVIAKAAKIARFSAKSMATLDIVAPEGAPVERIVVVGIGKVGELTAHDWLKAGGAAASKVKNTDKVAIFIDVPGLETDARAAADFALGMLLRAYSFDAYKTKKNDDEEKSAKSVKVTIVTADATGARKAFSESEAIAGGVNLARDLVNEPPNALGPVEFAARAKELENLGVEVEILTEKEMRRLGMGALLGVAQGSVRPPRLAVMQWKGGKAKDRPVAFVGKGVVFDTGGISIKPAAGMEDMKGDMGGAAAVTGLMHVLAARKAAVNAVGIIGLVENMPDGNAQRPGDIVTSMSGQTIEVINTDAEGRLVLCDALWYCSDRFKPQFMINLATLTGAIVVALGNVHAGLFSNDDQLSAQLTAAGLSTNEKLWRMPLGKDYDKLIDSKFADMKNTGGRQAGSITAAHFLKRFVQDTPWAHLDIAGTAMGSPQDEINQSWGSGFGVRLLDELVRANCESR.

Positions 262 and 267 each coordinate Mn(2+). K274 is an active-site residue. D285, D344, and E346 together coordinate Mn(2+). Residue R348 is part of the active site.

The protein belongs to the peptidase M17 family. Mn(2+) serves as cofactor.

It is found in the cytoplasm. It carries out the reaction Release of an N-terminal amino acid, Xaa-|-Yaa-, in which Xaa is preferably Leu, but may be other amino acids including Pro although not Arg or Lys, and Yaa may be Pro. Amino acid amides and methyl esters are also readily hydrolyzed, but rates on arylamides are exceedingly low.. The enzyme catalyses Release of an N-terminal amino acid, preferentially leucine, but not glutamic or aspartic acids.. Functionally, presumably involved in the processing and regular turnover of intracellular proteins. Catalyzes the removal of unsubstituted N-terminal amino acids from various peptides. The chain is Probable cytosol aminopeptidase from Rhizobium etli (strain ATCC 51251 / DSM 11541 / JCM 21823 / NBRC 15573 / CFN 42).